A 469-amino-acid chain; its full sequence is Argininosuccinate lyase (469 aa).

Belongs to the lyase 1 family. Argininosuccinate lyase subfamily.

It is found in the cytoplasm. The catalysed reaction is 2-(N(omega)-L-arginino)succinate = fumarate + L-arginine. The protein operates within amino-acid biosynthesis; L-arginine biosynthesis; L-arginine from L-ornithine and carbamoyl phosphate: step 3/3. This Saccharophagus degradans (strain 2-40 / ATCC 43961 / DSM 17024) protein is Argininosuccinate lyase.